Reading from the N-terminus, the 113-residue chain is Large ribosomal subunit protein bL17 (113 aa).

The protein belongs to the bacterial ribosomal protein bL17 family. In terms of assembly, part of the 50S ribosomal subunit. Contacts protein L32.

The polypeptide is Large ribosomal subunit protein bL17 (Clostridioides difficile (strain 630) (Peptoclostridium difficile)).